Here is an 868-residue protein sequence, read N- to C-terminus: Spindle and centriole-associated protein 1 (868 aa).

Disordered stretches follow at residues 129 to 154 (RTGFPNVTMAPGSSRSPAGINQDPGT), 172 to 201 (DDGGAESTAHSQSEDSESELPNSLSPHSNR), 229 to 250 (IAAQSQRTPPGSPSSELSAEDQ), and 291 to 326 (KPLLSKVKRKQDMRALSKQKKNMLSSSTTSADLASS). Polar residues-rich tracts occupy residues 190–200 (ELPNSLSPHSN) and 229–245 (IAAQSQRTPPGSPSSEL). Thr236 carries the phosphothreonine modification. Position 240 is a phosphoserine (Ser240). Positions 315–326 (SSSTTSADLASS) are enriched in low complexity. Residues 381–434 (RYLKESETQLRKEVETRQQLEQMLGDHRELIDALTAEILLLREENGAVQARLQQ) are a coiled coil. Disordered stretches follow at residues 630-664 (PQFVSLSQPPCSSPPSTQQSRNPVFSEEPTVLGDG) and 702-722 (SSGGEHGDGLREPSRQGNASE). The segment covering 634-649 (SLSQPPCSSPPSTQQS) has biased composition (low complexity). Ser655 carries the post-translational modification Phosphoserine. Basic and acidic residues predominate over residues 706 to 715 (EHGDGLREPS). The stretch at 736 to 764 (SSMEERIAELNRQSMEARSKLLQLIEQQK) forms a coiled coil. Phosphoserine occurs at positions 772, 773, 776, and 831. Residues 805-868 (SSKCNTVSPV…GWFALSAHLP (64 aa)) form a disordered region. A compositionally biased stretch (low complexity) spans 812-831 (SPVSGVSSRRSSGAISNSCS).

In terms of assembly, interacts with CEP120.

It localises to the cytoplasm. It is found in the cytoskeleton. The protein resides in the microtubule organizing center. Its subcellular location is the centrosome. The protein localises to the centriole. It localises to the spindle. Its function is as follows. Regulator required for centriole duplication, for proper bipolar spindle formation and chromosome congression in mitosis. This is Spindle and centriole-associated protein 1 (Spice1) from Rattus norvegicus (Rat).